A 255-amino-acid polypeptide reads, in one-letter code: Phosphoribosylformylglycinamidine synthase subunit PurQ (255 aa).

Residues 6–255 (TLILRTPGTN…TNAVKWARQV (250 aa)) enclose the Glutamine amidotransferase type-1 domain. Catalysis depends on C96, which acts as the Nucleophile. Active-site residues include H217 and E219.

Part of the FGAM synthase complex composed of 1 PurL, 1 PurQ and 2 PurS subunits.

Its subcellular location is the cytoplasm. It catalyses the reaction N(2)-formyl-N(1)-(5-phospho-beta-D-ribosyl)glycinamide + L-glutamine + ATP + H2O = 2-formamido-N(1)-(5-O-phospho-beta-D-ribosyl)acetamidine + L-glutamate + ADP + phosphate + H(+). The enzyme catalyses L-glutamine + H2O = L-glutamate + NH4(+). The protein operates within purine metabolism; IMP biosynthesis via de novo pathway; 5-amino-1-(5-phospho-D-ribosyl)imidazole from N(2)-formyl-N(1)-(5-phospho-D-ribosyl)glycinamide: step 1/2. Part of the phosphoribosylformylglycinamidine synthase complex involved in the purines biosynthetic pathway. Catalyzes the ATP-dependent conversion of formylglycinamide ribonucleotide (FGAR) and glutamine to yield formylglycinamidine ribonucleotide (FGAM) and glutamate. The FGAM synthase complex is composed of three subunits. PurQ produces an ammonia molecule by converting glutamine to glutamate. PurL transfers the ammonia molecule to FGAR to form FGAM in an ATP-dependent manner. PurS interacts with PurQ and PurL and is thought to assist in the transfer of the ammonia molecule from PurQ to PurL. This is Phosphoribosylformylglycinamidine synthase subunit PurQ from Dehalococcoides mccartyi (strain ATCC BAA-2266 / KCTC 15142 / 195) (Dehalococcoides ethenogenes (strain 195)).